We begin with the raw amino-acid sequence, 873 residues long: Alanine--tRNA ligase (873 aa).

4 residues coordinate Zn(2+): His-563, His-567, Cys-664, and His-668.

It belongs to the class-II aminoacyl-tRNA synthetase family. Zn(2+) is required as a cofactor.

It localises to the cytoplasm. The catalysed reaction is tRNA(Ala) + L-alanine + ATP = L-alanyl-tRNA(Ala) + AMP + diphosphate. Its function is as follows. Catalyzes the attachment of alanine to tRNA(Ala) in a two-step reaction: alanine is first activated by ATP to form Ala-AMP and then transferred to the acceptor end of tRNA(Ala). Also edits incorrectly charged Ser-tRNA(Ala) and Gly-tRNA(Ala) via its editing domain. The sequence is that of Alanine--tRNA ligase from Aromatoleum aromaticum (strain DSM 19018 / LMG 30748 / EbN1) (Azoarcus sp. (strain EbN1)).